The sequence spans 260 residues: Hydroxyethylthiazole kinase (260 aa).

ATP contacts are provided by Arg-126 and Ser-172. Residue Gly-199 coordinates substrate.

Belongs to the Thz kinase family. Mg(2+) serves as cofactor.

It catalyses the reaction 5-(2-hydroxyethyl)-4-methylthiazole + ATP = 4-methyl-5-(2-phosphooxyethyl)-thiazole + ADP + H(+). The protein operates within cofactor biosynthesis; thiamine diphosphate biosynthesis; 4-methyl-5-(2-phosphoethyl)-thiazole from 5-(2-hydroxyethyl)-4-methylthiazole: step 1/1. Its function is as follows. Catalyzes the phosphorylation of the hydroxyl group of 4-methyl-5-beta-hydroxyethylthiazole (THZ). This chain is Hydroxyethylthiazole kinase, found in Burkholderia thailandensis (strain ATCC 700388 / DSM 13276 / CCUG 48851 / CIP 106301 / E264).